A 916-amino-acid polypeptide reads, in one-letter code: MARYRQPERLTRTISCSDDYVDLKPVNEQPSDKMDPNLGLIASMPKVDQEDRSDLQRRWRNLTKLKPGLSEVNELDNESTPAVLIFGGINTARPTDYLNSASMFLYHLDRNNWNFYGTMLEPRNYHAAAYFHGKVYLFGGYNPLHCIKGKMQATSTTFQLTLDVKQWRRRADMPSARAHHGVTIMDERIFVFGGKDSNGNIIASVEMYEPELDQWTSLASIPEPLMGSAVTNNEGLIYVVGGLTTKKEKNQEGVLSNKIYCFDPLNNKWYRKPPLPCPRAFASATTQNKKIWIWGGASLSEGGTLASTTSVDIWDPKKGRFEQHLIFDSPKHCLAVTKAGTQVFIIGGMSSKENSSLAEVQVYDRKRDILQKCAFLPVSLTGTAAVGIPVNRSPASDITTSKTTRSGSRKTQKTLKDKQQSDIHARNKAARTIQLNYRKYHASKQRRSGIPRDALRKKINVGEGDRVSGRIRTYITGYRPKAPGDDDLSKDFAPVTIPFWPPDPDTSDSVFHTVVDQFHCAKEKMQFKHFYTIPRQIDPNLGMLLFMDEDYQHSKKVLGLRNVESTPYYMSRFHATGDIQDTSIPVIIAIGGVDPQDPMNVSYGRSVFQYHPLKDRWEFFGFMSLPRNHHAAAYYRGAIYVTGGCDPHIRCWGEMVATKMTFVYRLSSNKWTRVADMHSARSHHSMVVFNDSIYVIGGRDDSGRLSASVESYVPALDEWNQEKPMPLPRMGMAVVSHGGYLWVMGGVTSTKGGNINPPVLDDVICYDPVFKHWVSGKPLRIARAFGSAVVCDDKIWLCGGAAPSQDENNYLVSIPAIDVYDNEALEWIQKATLSCPRHSSVVVALESCLYLIGGINSHELSAINRNELYTTDSDTVQSIRELPVQLTGMAAVTIPPTCVTFRSESLSIMIRHKVVT.

Kelch repeat units follow at residues 82 to 133 (AVLI…YFHG), 134 to 187 (KVYL…IMDE), 188 to 235 (RIFV…NNEG), 237 to 289 (IYVV…TQNK), 291 to 341 (IWIW…KAGT), and 342 to 390 (QVFI…GIPV). Residues 393 to 426 (SPASDITTSKTTRSGSRKTQKTLKDKQQSDIHAR) form a disordered region. Basic and acidic residues predominate over residues 414-425 (TLKDKQQSDIHA). 6 Kelch repeats span residues 586–637 (VIIA…YYRG), 638–691 (AIYV…VFND), 692–739 (SIYV…SHGG), 741–793 (LWVM…VCDD), 795–847 (IWLC…ALES), and 849–896 (LYLI…TIPP).

In terms of tissue distribution, sperm.

May have an enzymatic role. Found the acrosomal vesicle at the anterior of sperm but not in the acrosomal process. This is Beta-scruin from Limulus polyphemus (Atlantic horseshoe crab).